The following is a 510-amino-acid chain: Probable serine/threonine-protein kinase 2 (510 aa).

The Protein kinase domain maps to tyrosine 111 to phenylalanine 364. ATP is bound by residues isoleucine 117 to alanine 125 and lysine 140. Aspartate 230 (proton acceptor) is an active-site residue. The segment at asparagine 408–lysine 428 is disordered.

This sequence belongs to the protein kinase superfamily. Ser/Thr protein kinase family.

It is found in the membrane. It catalyses the reaction L-seryl-[protein] + ATP = O-phospho-L-seryl-[protein] + ADP + H(+). It carries out the reaction L-threonyl-[protein] + ATP = O-phospho-L-threonyl-[protein] + ADP + H(+). The chain is Probable serine/threonine-protein kinase 2 (PK2) from Plasmodium falciparum (isolate K1 / Thailand).